Reading from the N-terminus, the 344-residue chain is Phenylalanine--tRNA ligase alpha subunit (344 aa).

A Mg(2+)-binding site is contributed by glutamate 256.

Belongs to the class-II aminoacyl-tRNA synthetase family. Phe-tRNA synthetase alpha subunit type 1 subfamily. As to quaternary structure, tetramer of two alpha and two beta subunits. Mg(2+) is required as a cofactor.

It is found in the cytoplasm. It catalyses the reaction tRNA(Phe) + L-phenylalanine + ATP = L-phenylalanyl-tRNA(Phe) + AMP + diphosphate + H(+). In Anoxybacillus flavithermus (strain DSM 21510 / WK1), this protein is Phenylalanine--tRNA ligase alpha subunit.